The following is a 929-amino-acid chain: SCY1-like protein 2 (929 aa).

Residues 32–327 form the Protein kinase domain; that stretch reads FDVGRHIASG…ADQMTKIPFF (296 aa). An HEAT repeat occupies 443 to 479; the sequence is DEIKNSVLPMVYRALEAPSIQIQELCLNIIPTFANLI. Residues 661–701 adopt a coiled-coil conformation; it reads ESENKEDGLQNKHKRASLTLEEKQKLAKEQEQAQKLKSQQP. Residue Ser677 is modified to Phosphoserine. The span at 684-694 shows a compositional bias: basic and acidic residues; sequence QKLAKEQEQAQ. Disordered regions lie at residues 684-709 and 906-929; these read QKLAKEQEQAQKLKSQQPLKPQVHTP and NFAQPPTTMTNSSSASNDLKDLFG. The span at 695-705 shows a compositional bias: low complexity; that stretch reads KLKSQQPLKPQ. Residues 699-929 form a necessary for interaction with AP2 complex and clathrin, interaction with clathrin is necessary for its targeting to the TGN and endosomal membranes region; it reads QQPLKPQVHT…ASNDLKDLFG (231 aa). Position 708 is a phosphothreonine (Thr708). Over residues 912 to 922 the composition is skewed to polar residues; the sequence is TTMTNSSSASN.

The protein belongs to the protein kinase superfamily. As to quaternary structure, interacts with clathrin and AP2B1; the interaction mediates the association with the AP-2 complex. In terms of processing, could autophosphorylate in presence of poly-L-lysine.

It is found in the cytoplasmic vesicle. Its subcellular location is the clathrin-coated vesicle. The protein resides in the golgi apparatus. The protein localises to the trans-Golgi network membrane. It localises to the endosome membrane. Functionally, component of the AP2-containing clathrin coat that may regulate clathrin-dependent trafficking at plasma membrane, TGN and endosomal system. A possible serine/threonine-protein kinase toward the beta2-subunit of the plasma membrane adapter complex AP2 and other proteins in presence of poly-L-lysine has not been confirmed. By regulating the expression of excitatory receptors at synapses, plays an essential role in neuronal function and signaling and in brain development. This is SCY1-like protein 2 from Homo sapiens (Human).